Consider the following 234-residue polypeptide: Ubiquitin domain-containing protein 2 (234 aa).

The tract at residues 1-46 (MGGCVGAQHDSSGSLNENSDGTGVALGRNQPLKKEKPKWKSDYPMT) is disordered. A compositionally biased stretch (polar residues) spans 9-21 (HDSSGSLNENSDG). The span at 32 to 41 (LKKEKPKWKS) shows a compositional bias: basic and acidic residues. Positions 152-227 (SQLRLRLSTG…VQVIVSQPVQ (76 aa)) constitute a Ubiquitin-like domain.

The protein localises to the cytoplasm. The protein is Ubiquitin domain-containing protein 2 (Ubtd2) of Mus musculus (Mouse).